The primary structure comprises 176 residues: Isopentenyl-diphosphate Delta-isomerase 1 (176 aa).

His23 and His30 together coordinate Mn(2+). One can recognise a Nudix hydrolase domain in the interval 28–162 (HLHRAFSCFI…EEFCTPWFKK (135 aa)). Residue Cys65 is part of the active site. Position 65 (Cys65) interacts with Mg(2+). His67 serves as a coordination point for Mn(2+). Glu85 contributes to the Mg(2+) binding site. Positions 112 and 114 each coordinate Mn(2+). Glu114 is an active-site residue.

This sequence belongs to the IPP isomerase type 1 family. Homodimer. The cofactor is Mg(2+). Mn(2+) serves as cofactor.

The protein localises to the cytoplasm. The enzyme catalyses isopentenyl diphosphate = dimethylallyl diphosphate. It participates in isoprenoid biosynthesis; dimethylallyl diphosphate biosynthesis; dimethylallyl diphosphate from isopentenyl diphosphate: step 1/1. Catalyzes the 1,3-allylic rearrangement of the homoallylic substrate isopentenyl (IPP) to its highly electrophilic allylic isomer, dimethylallyl diphosphate (DMAPP). The polypeptide is Isopentenyl-diphosphate Delta-isomerase 1 (Photorhabdus laumondii subsp. laumondii (strain DSM 15139 / CIP 105565 / TT01) (Photorhabdus luminescens subsp. laumondii)).